Reading from the N-terminus, the 335-residue chain is Adenosine deaminase (335 aa).

Residues H12 and H14 each coordinate Zn(2+). Positions 14 and 16 each coordinate substrate. Residue H197 coordinates Zn(2+). E200 (proton donor) is an active-site residue. Residue D278 coordinates Zn(2+).

It belongs to the metallo-dependent hydrolases superfamily. Adenosine and AMP deaminases family. Adenosine deaminase subfamily. Zn(2+) is required as a cofactor.

The enzyme catalyses adenosine + H2O + H(+) = inosine + NH4(+). The catalysed reaction is 2'-deoxyadenosine + H2O + H(+) = 2'-deoxyinosine + NH4(+). Catalyzes the hydrolytic deamination of adenosine and 2-deoxyadenosine. The sequence is that of Adenosine deaminase from Clostridium botulinum (strain Okra / Type B1).